Reading from the N-terminus, the 313-residue chain is Pseudouridine kinase (313 aa).

The protein belongs to the carbohydrate kinase PfkB family.

It carries out the reaction pseudouridine + ATP = psi-UMP + ADP + H(+). In terms of biological role, catalyzes the phosphorylation of pseudouridine to pseudouridine 5'-phosphate (PsiMP). This Escherichia coli (strain K12) protein is Pseudouridine kinase (psuK).